The chain runs to 342 residues: Tetraacyldisaccharide 4'-kinase (342 aa).

ATP is bound at residue 68-75 (TVGGTGKT).

This sequence belongs to the LpxK family.

The enzyme catalyses a lipid A disaccharide + ATP = a lipid IVA + ADP + H(+). Its pathway is glycolipid biosynthesis; lipid IV(A) biosynthesis; lipid IV(A) from (3R)-3-hydroxytetradecanoyl-[acyl-carrier-protein] and UDP-N-acetyl-alpha-D-glucosamine: step 6/6. Transfers the gamma-phosphate of ATP to the 4'-position of a tetraacyldisaccharide 1-phosphate intermediate (termed DS-1-P) to form tetraacyldisaccharide 1,4'-bis-phosphate (lipid IVA). This Burkholderia cenocepacia (strain HI2424) protein is Tetraacyldisaccharide 4'-kinase.